The sequence spans 176 residues: ATP-dependent protease subunit HslV (176 aa).

Threonine 4 is a catalytic residue. Na(+) contacts are provided by glycine 158, cysteine 161, and threonine 164.

The protein belongs to the peptidase T1B family. HslV subfamily. A double ring-shaped homohexamer of HslV is capped on each side by a ring-shaped HslU homohexamer. The assembly of the HslU/HslV complex is dependent on binding of ATP.

Its subcellular location is the cytoplasm. It carries out the reaction ATP-dependent cleavage of peptide bonds with broad specificity.. With respect to regulation, allosterically activated by HslU binding. In terms of biological role, protease subunit of a proteasome-like degradation complex believed to be a general protein degrading machinery. The protein is ATP-dependent protease subunit HslV of Rhizobium meliloti (strain 1021) (Ensifer meliloti).